The primary structure comprises 464 residues: Asparagine--tRNA ligase (464 aa).

Belongs to the class-II aminoacyl-tRNA synthetase family. As to quaternary structure, homodimer.

The protein resides in the cytoplasm. The enzyme catalyses tRNA(Asn) + L-asparagine + ATP = L-asparaginyl-tRNA(Asn) + AMP + diphosphate + H(+). The protein is Asparagine--tRNA ligase of Cytophaga hutchinsonii (strain ATCC 33406 / DSM 1761 / CIP 103989 / NBRC 15051 / NCIMB 9469 / D465).